The following is a 229-amino-acid chain: 2-C-methyl-D-erythritol 4-phosphate cytidylyltransferase (229 aa).

The protein belongs to the IspD/TarI cytidylyltransferase family. IspD subfamily.

It carries out the reaction 2-C-methyl-D-erythritol 4-phosphate + CTP + H(+) = 4-CDP-2-C-methyl-D-erythritol + diphosphate. It participates in isoprenoid biosynthesis; isopentenyl diphosphate biosynthesis via DXP pathway; isopentenyl diphosphate from 1-deoxy-D-xylulose 5-phosphate: step 2/6. In terms of biological role, catalyzes the formation of 4-diphosphocytidyl-2-C-methyl-D-erythritol from CTP and 2-C-methyl-D-erythritol 4-phosphate (MEP). This is 2-C-methyl-D-erythritol 4-phosphate cytidylyltransferase from Shouchella clausii (strain KSM-K16) (Alkalihalobacillus clausii).